A 242-amino-acid polypeptide reads, in one-letter code: Probable transcriptional regulatory protein BamMC406_2210 (242 aa).

This sequence belongs to the TACO1 family.

It localises to the cytoplasm. This Burkholderia ambifaria (strain MC40-6) protein is Probable transcriptional regulatory protein BamMC406_2210.